Here is a 349-residue protein sequence, read N- to C-terminus: Glycerol-3-phosphate dehydrogenase [NAD(+)], cytoplasmic (349 aa).

NAD(+) is bound at residue 10 to 15 (GSGNWG). Residue Lys120 coordinates substrate. Ala153 serves as a coordination point for NAD(+). Residue Ser154 is modified to Phosphoserine. Lys204 acts as the Proton acceptor in catalysis. An NAD(+)-binding site is contributed by Arg269. 269-270 (RN) provides a ligand contact to substrate. An N6-succinyllysine modification is found at Lys289. Residues Lys296 and Gln298 each contribute to the NAD(+) site. Tyr326 is modified (phosphotyrosine).

This sequence belongs to the NAD-dependent glycerol-3-phosphate dehydrogenase family. Homodimer.

Its subcellular location is the cytoplasm. It catalyses the reaction sn-glycerol 3-phosphate + NAD(+) = dihydroxyacetone phosphate + NADH + H(+). Its function is as follows. Has glycerol-3-phosphate dehydrogenase activity. The chain is Glycerol-3-phosphate dehydrogenase [NAD(+)], cytoplasmic (GPD1) from Pongo abelii (Sumatran orangutan).